Consider the following 365-residue polypeptide: DNA repair protein rhp51 (365 aa).

Residues 1–25 (MADTEVEMQVSAADTNNNENGQAQS) form a disordered region. Over residues 12-25 (AADTNNNENGQAQS) the composition is skewed to polar residues. An ATP-binding site is contributed by 149-156 (GEFRTGKS).

This sequence belongs to the RecA family. RAD51 subfamily. Interacts with rad22, rad54, rdh54, rhp54, rti1, swi2 and swi5. Forms homooiligomers.

Its subcellular location is the nucleus. Its function is as follows. Required both for recombination and for the repair of DNA damage caused by X-rays. Binds to single and double-stranded DNA, in the presence of magnesium, and exhibits DNA-dependent ATPase activity. Promotes DNA strand annealing and strand exchange via DNA recombinase activity and forms helical nucleoprotein filaments. This Schizosaccharomyces pombe (strain 972 / ATCC 24843) (Fission yeast) protein is DNA repair protein rhp51 (rhp51).